A 404-amino-acid chain; its full sequence is CD2 homolog (404 aa).

The signal sequence occupies residues 1-16; sequence MFITLIFLSYINIVLS. The Extracellular portion of the chain corresponds to 17–225; the sequence is NNYWARLNET…QNYFLENIHT (209 aa). N-linked (GlcNAc...) asparagine; by host glycans are attached at residues Asn24, Asn87, Asn92, Asn96, Asn122, Asn139, Asn167, Asn193, Asn200, and Asn206. Disulfide bonds link Cys140-Cys207 and Cys147-Cys190. Residues 226–246 form a helical membrane-spanning segment; it reads LFYIIIFIVSGLIASIFISII. The Cytoplasmic portion of the chain corresponds to 247 to 404; it reads TFLSLRKRKK…ISLIHVDRII (158 aa). The interval 260 to 295 is disordered; that stretch reads EIESPPPESNEEEQCQHDDTTSIHEPSPREPLLPKP. Over residues 273–287 the composition is skewed to basic and acidic residues; that stretch reads QCQHDDTTSIHEPSP. A run of 7 repeats spans residues 322–327, 328–333, 334–339, 340–345, 346–351, 352–357, and 358–363. The interval 322–363 is 7 X 6 AA tandem repeats of [KN]-P-C-P-P-P; the sequence is NPCPPPKPCPPPKPCPPPKPCPPPKPCPPPKPCPPPKPCPPP. Residues 357–388 show a composition bias toward pro residues; the sequence is PKPCPPPKPCSSPESYSPPKPLPSIPLLPNIP. Positions 357 to 390 are disordered; the sequence is PKPCPPPKPCSSPESYSPPKPLPSIPLLPNIPPL.

The protein belongs to the asfivirus CD2 homolog protein family. In terms of assembly, both glycosylated and nonglycosylated forms interact (via C-terminus) with the host AP-1 complex. Post-translationally, cleaved into two fragments of 63 kDa and 26 kDa containing respectively the glycosylated N-terminus and the nonglycosylated C-terminus. A full-length 89-kDa glycosylated form also exists.

It localises to the host membrane. It is found in the virion membrane. Its subcellular location is the host Golgi apparatus. Functionally, may play an immunosuppressive role by inhibiting lymphocyte proliferation and subsequently facilitating viral replication and generalization of infection. Responsible for viral hemadsorption, which may help viral spread. Increases virus replication in the tick vector at the step of virus uptake or replication in the tick gut. May play a role in the host Golgi reorganization to yield viral factories. May play a role in host cell penetration. The protein is CD2 homolog of African swine fever virus (isolate Tick/South Africa/Pretoriuskop Pr4/1996) (ASFV).